A 238-amino-acid polypeptide reads, in one-letter code: tRNA (guanine-N(7)-)-methyltransferase (238 aa).

S-adenosyl-L-methionine contacts are provided by Glu68, Glu93, Asp120, and Asp143. Asp143 is a catalytic residue. Substrate contacts are provided by residues Lys147, Asp179, and 216–219 (TKFE).

The protein belongs to the class I-like SAM-binding methyltransferase superfamily. TrmB family.

It catalyses the reaction guanosine(46) in tRNA + S-adenosyl-L-methionine = N(7)-methylguanosine(46) in tRNA + S-adenosyl-L-homocysteine. It participates in tRNA modification; N(7)-methylguanine-tRNA biosynthesis. Functionally, catalyzes the formation of N(7)-methylguanine at position 46 (m7G46) in tRNA. This chain is tRNA (guanine-N(7)-)-methyltransferase, found in Aliivibrio fischeri (strain MJ11) (Vibrio fischeri).